The chain runs to 213 residues: Orotate phosphoribosyltransferase (213 aa).

5-phospho-alpha-D-ribose 1-diphosphate is bound at residue K26. An orotate-binding site is contributed by 34 to 35 (FF). 5-phospho-alpha-D-ribose 1-diphosphate contacts are provided by residues 72 to 73 (YK), R99, K100, K103, H105, and 124 to 132 (DDVITAGTA). Orotate contacts are provided by T128 and R156.

Belongs to the purine/pyrimidine phosphoribosyltransferase family. PyrE subfamily. In terms of assembly, homodimer. Mg(2+) is required as a cofactor.

It carries out the reaction orotidine 5'-phosphate + diphosphate = orotate + 5-phospho-alpha-D-ribose 1-diphosphate. The protein operates within pyrimidine metabolism; UMP biosynthesis via de novo pathway; UMP from orotate: step 1/2. Functionally, catalyzes the transfer of a ribosyl phosphate group from 5-phosphoribose 1-diphosphate to orotate, leading to the formation of orotidine monophosphate (OMP). This chain is Orotate phosphoribosyltransferase, found in Vibrio atlanticus (strain LGP32) (Vibrio splendidus (strain Mel32)).